The sequence spans 940 residues: Isoleucine--tRNA ligase (940 aa).

A 'HIGH' region motif is present at residues 58 to 68 (PYANGSIHIGH). Glutamate 564 provides a ligand contact to L-isoleucyl-5'-AMP. Positions 605-609 (KMSKS) match the 'KMSKS' region motif. Lysine 608 provides a ligand contact to ATP. Zn(2+)-binding residues include cysteine 903, cysteine 906, cysteine 923, and cysteine 926.

Belongs to the class-I aminoacyl-tRNA synthetase family. IleS type 1 subfamily. As to quaternary structure, monomer. Zn(2+) serves as cofactor.

The protein localises to the cytoplasm. The enzyme catalyses tRNA(Ile) + L-isoleucine + ATP = L-isoleucyl-tRNA(Ile) + AMP + diphosphate. Catalyzes the attachment of isoleucine to tRNA(Ile). As IleRS can inadvertently accommodate and process structurally similar amino acids such as valine, to avoid such errors it has two additional distinct tRNA(Ile)-dependent editing activities. One activity is designated as 'pretransfer' editing and involves the hydrolysis of activated Val-AMP. The other activity is designated 'posttransfer' editing and involves deacylation of mischarged Val-tRNA(Ile). The sequence is that of Isoleucine--tRNA ligase from Shewanella baltica (strain OS185).